A 311-amino-acid polypeptide reads, in one-letter code: MSEELTPQQVTRMTKLQKRLRTEVGRAIGDYNMIEEGDRVMCCLSGGKDSYAMLDILLNLQQRAPIKFEIVAVNLDQKQPGFPEDILPAYLDTLGVAYHILEKDTYSIVKDKIPEGKTTCSLCSRLRRGTLYGFAQKIGATKIALGHHRDDIIETMFLNMFFAGKMKAMPPKLLSDDGANMVIRPLAYAREKDIAEYAALKGFPIIPCNLCGSQENLKRAAVKEMLVQWDKQHPGRIETIFTAMQNTAPSQGVDREQFDFLSLQRDPDAPMSGQVAESDLPAFDFVDVSNNGHINLDAAARIDVVSTYTPE.

A PP-loop motif motif is present at residues 45–50 (SGGKDS). [4Fe-4S] cluster contacts are provided by C120, C123, and C211.

This sequence belongs to the TtcA family. Homodimer. Requires Mg(2+) as cofactor. It depends on [4Fe-4S] cluster as a cofactor.

The protein resides in the cytoplasm. It catalyses the reaction cytidine(32) in tRNA + S-sulfanyl-L-cysteinyl-[cysteine desulfurase] + AH2 + ATP = 2-thiocytidine(32) in tRNA + L-cysteinyl-[cysteine desulfurase] + A + AMP + diphosphate + H(+). Its pathway is tRNA modification. Functionally, catalyzes the ATP-dependent 2-thiolation of cytidine in position 32 of tRNA, to form 2-thiocytidine (s(2)C32). The sulfur atoms are provided by the cysteine/cysteine desulfurase (IscS) system. This chain is tRNA-cytidine(32) 2-sulfurtransferase, found in Shewanella pealeana (strain ATCC 700345 / ANG-SQ1).